Consider the following 639-residue polypeptide: MAU2 chromatid cohesion factor homolog (639 aa).

TPR repeat units lie at residues 453-486 (GGFY…ANAE) and 493-526 (SCSL…ASKI).

Belongs to the SCC4/mau-2 family. Interacts with Nipped-B to form the cohesin loading complex.

The protein resides in the nucleus. The protein localises to the nucleoplasm. Functionally, required for association of the cohesin complex with chromatin during interphase. Plays a role in sister chromatid cohesion and normal progression through prometaphase. This Drosophila ananassae (Fruit fly) protein is MAU2 chromatid cohesion factor homolog.